The primary structure comprises 614 residues: Phosphomethylpyrimidine synthase (614 aa).

Residues N230, M259, Y288, H324, 344-346 (SRG), 385-388 (DGLR), and E424 each bind substrate. Residue H428 coordinates Zn(2+). Y451 is a substrate binding site. H492 is a binding site for Zn(2+). Residues C572, C575, and C580 each contribute to the [4Fe-4S] cluster site.

Belongs to the ThiC family. In terms of assembly, homodimer. [4Fe-4S] cluster serves as cofactor.

The enzyme catalyses 5-amino-1-(5-phospho-beta-D-ribosyl)imidazole + S-adenosyl-L-methionine = 4-amino-2-methyl-5-(phosphooxymethyl)pyrimidine + CO + 5'-deoxyadenosine + formate + L-methionine + 3 H(+). It participates in cofactor biosynthesis; thiamine diphosphate biosynthesis. Catalyzes the synthesis of the hydroxymethylpyrimidine phosphate (HMP-P) moiety of thiamine from aminoimidazole ribotide (AIR) in a radical S-adenosyl-L-methionine (SAM)-dependent reaction. The sequence is that of Phosphomethylpyrimidine synthase from Stenotrophomonas maltophilia (strain K279a).